Consider the following 229-residue polypeptide: NAD(P)H-hydrate epimerase (229 aa).

The YjeF N-terminal domain maps to 10–224 (SREVDQIAIE…DIGIPPALLD (215 aa)). Position 57-61 (57-61 (NNGGD)) interacts with (6S)-NADPHX. Residues Asn58 and Asp129 each contribute to the K(+) site. Residues 133-139 (GTGIRGQ) and Asp167 contribute to the (6S)-NADPHX site. Ser170 contacts K(+).

This sequence belongs to the NnrE/AIBP family. The cofactor is K(+).

It carries out the reaction (6R)-NADHX = (6S)-NADHX. The enzyme catalyses (6R)-NADPHX = (6S)-NADPHX. Catalyzes the epimerization of the S- and R-forms of NAD(P)HX, a damaged form of NAD(P)H that is a result of enzymatic or heat-dependent hydration. This is a prerequisite for the S-specific NAD(P)H-hydrate dehydratase to allow the repair of both epimers of NAD(P)HX. In Rubinisphaera brasiliensis (strain ATCC 49424 / DSM 5305 / JCM 21570 / IAM 15109 / NBRC 103401 / IFAM 1448) (Planctomyces brasiliensis), this protein is NAD(P)H-hydrate epimerase.